The primary structure comprises 579 residues: Arginine--tRNA ligase (579 aa).

The 'HIGH' region signature appears at 127 to 137 (PNLAKEMHVGH).

It belongs to the class-I aminoacyl-tRNA synthetase family. As to quaternary structure, monomer.

The protein localises to the cytoplasm. The catalysed reaction is tRNA(Arg) + L-arginine + ATP = L-arginyl-tRNA(Arg) + AMP + diphosphate. The protein is Arginine--tRNA ligase of Stutzerimonas stutzeri (strain A1501) (Pseudomonas stutzeri).